A 642-amino-acid chain; its full sequence is Chaperone protein DnaK (642 aa).

The residue at position 198 (threonine 198) is a Phosphothreonine; by autocatalysis. Over residues aspartate 578–lysine 589 the composition is skewed to basic and acidic residues. The interval aspartate 578–lysine 642 is disordered. Positions alanine 603–aspartate 619 are enriched in low complexity.

The protein belongs to the heat shock protein 70 family.

Acts as a chaperone. This is Chaperone protein DnaK from Hahella chejuensis (strain KCTC 2396).